The following is a 149-amino-acid chain: NPC intracellular cholesterol transporter 2 (149 aa).

The first 21 residues, 1–21 (MRLLVAAFLLLALGDLGPGGA), serve as a signal peptide directing secretion. Disulfide bonds link C27/C140, C42/C47, and C93/C99. N58 carries an N-linked (GlcNAc...) asparagine glycan. Position 116 is an N6-acetyllysine (K116).

Belongs to the NPC2 family. In terms of assembly, interacts with NPC1 (via the second lumenal domain) in a cholestrol-dependent manner. Interacts with NUS1/NgBR, the interaction stabilizes NCP2 and regulates cholesterol trafficking. Interacts with DHDDS. Interacts with NEDD4L (via C2 domain). Interacts with NPC1L1. In terms of tissue distribution, epididymis. High levels are found in the caput and corpus regions. Weaker levels in the distal cauda and in the efferent ducts.

It is found in the secreted. It localises to the endoplasmic reticulum. The protein localises to the lysosome. The catalysed reaction is cholesterol(in) = cholesterol(out). Intracellular cholesterol transporter which acts in concert with NPC1 and plays an important role in the egress of cholesterol from the lysosomal compartment. Unesterified cholesterol that has been released from LDLs in the lumen of the late endosomes/lysosomes is transferred by NPC2 to the cholesterol-binding pocket in the N-terminal domain of NPC1. May bind and mobilize cholesterol that is associated with membranes. NPC2 binds cholesterol with a 1:1 stoichiometry. Can bind a variety of sterols, including lathosterol, desmosterol and the plant sterols stigmasterol and beta-sitosterol. The secreted form of NCP2 regulates biliary cholesterol secretion via stimulation of ABCG5/ABCG8-mediated cholesterol transport. The protein is NPC intracellular cholesterol transporter 2 of Canis lupus familiaris (Dog).